Consider the following 153-residue polypeptide: uncharacterized protein (153 aa).

Residues 72–98 form a disordered region; the sequence is LPISKTNDAERSQQTTKAPVMERTESS.

The protein localises to the cytoplasm. It is found in the nucleus. This is an uncharacterized protein from Schizosaccharomyces pombe (strain 972 / ATCC 24843) (Fission yeast).